Here is a 123-residue protein sequence, read N- to C-terminus: Small ribosomal subunit protein uS12 (123 aa).

D89 bears the 3-methylthioaspartic acid mark.

Belongs to the universal ribosomal protein uS12 family. In terms of assembly, part of the 30S ribosomal subunit. Contacts proteins S8 and S17. May interact with IF1 in the 30S initiation complex.

Its function is as follows. With S4 and S5 plays an important role in translational accuracy. Functionally, interacts with and stabilizes bases of the 16S rRNA that are involved in tRNA selection in the A site and with the mRNA backbone. Located at the interface of the 30S and 50S subunits, it traverses the body of the 30S subunit contacting proteins on the other side and probably holding the rRNA structure together. The combined cluster of proteins S8, S12 and S17 appears to hold together the shoulder and platform of the 30S subunit. The protein is Small ribosomal subunit protein uS12 of Phenylobacterium zucineum (strain HLK1).